The sequence spans 115 residues: MEIIMIFVSGILTSISVYLVLSKSLIRIIMGTTLLTHAANLFLITMGGLKHGTVPIFEKGTSSYVDPIPQALILTAIVIAFATTAFFLVLAFRTYKELGTDNVELMKGAPEDDRE.

The next 3 membrane-spanning stretches (helical) occupy residues 1–21 (MEIIMIFVSGILTSISVYLVL), 28–48 (IIMGTTLLTHAANLFLITMGG), and 72–92 (LILTAIVIAFATTAFFLVLAF).

It belongs to the CPA3 antiporters (TC 2.A.63) subunit C family. In terms of assembly, may form a heterooligomeric complex that consists of seven subunits: mnhA1, mnhB1, mnhC1, mnhD1, mnhE1, mnhF1 and mnhG1.

The protein localises to the cell membrane. In terms of biological role, mnh complex is a Na(+)/H(+) antiporter involved in Na(+) excretion. This chain is Na(+)/H(+) antiporter subunit C1 (mnhC1), found in Staphylococcus epidermidis (strain ATCC 35984 / DSM 28319 / BCRC 17069 / CCUG 31568 / BM 3577 / RP62A).